A 458-amino-acid chain; its full sequence is MMSSRTDTDGSSIRFSDHTLDKATKAKVTLENYYSNLVTQYGERKQRLAKLEAQLKDESLTESQRQEKRLQHAQKETEYLRLKRLRLGVEDFEALKVIGRGAFGEVRLVQKKDTGHVYAMKVLRKADMLEKEQVAHVRAERDVLVEADHQWVVKMYYSFQDQVNLYLIMEFLPGGDMMTLLMKKDTLSEEGTQFYISETALAIDSIHKLGFIHRDIKPDNLLLDARGHLKLSDFGLCTGLKKSHRTDFYRDLSQAKPSDFIGTCASPMDSKRRAESWKRNRRALAYSTVGTPDYIAPEVFLQTGYGPACDWWSLGVIMYEMLMGYPPFCSDNPQDTYRKVMNWRETLIFPPEIPISEEAKETIIKFCCEADRRLGSQRGLEDLKSVPFFRGVDWEHIRERPAAIPVEVRSIDDTSNFDEFPDVSLEIPSAPIPQGGEIAKDWVFINYTYKRFEVRNLE.

Residues 92–389 enclose the Protein kinase domain; that stretch reads FEALKVIGRG…LEDLKSVPFF (298 aa). ATP-binding positions include 98–106 and lysine 121; that span reads IGRGAFGEV. An interaction with mats and Mob1 region spans residues 118–179; it reads YAMKVLRKAD…EFLPGGDMMT (62 aa). Residue aspartate 215 is the Proton acceptor of the active site. Residue serine 287 is modified to Phosphoserine. The 69-residue stretch at 390–458 folds into the AGC-kinase C-terminal domain; sequence RGVDWEHIRE…YKRFEVRNLE (69 aa). Threonine 448 carries the phosphothreonine modification.

Belongs to the protein kinase superfamily. AGC Ser/Thr protein kinase family. As to quaternary structure, interacts with, and is activated by, Mob1. Requires Mg(2+) as cofactor.

It localises to the cytoplasm. It is found in the nucleus. The catalysed reaction is L-seryl-[protein] + ATP = O-phospho-L-seryl-[protein] + ADP + H(+). It carries out the reaction L-threonyl-[protein] + ATP = O-phospho-L-threonyl-[protein] + ADP + H(+). Serine/threonine-protein kinase involved in controlling cell structure and proliferation of a variety of polarized outgrowths including epidermal hairs, bristles, arista laterals, and dendrites. Together with fry, maintains the integrity of epidermal hairs and is an essential component of the signaling pathway regulating dendritic branching of sensory neurons. Reduces neurite outgrowth by phosphorylating pav/pavarotti, thereby inhibiting its function in microtubule-microtubule sliding. The protein is Serine/threonine-protein kinase tricornered of Drosophila pseudoobscura pseudoobscura (Fruit fly).